Consider the following 113-residue polypeptide: T cell receptor alpha variable 8-4 (113 aa).

The first 20 residues, 1-20 (MLLLLVPVLEVIFTLGGTRA), serve as a signal peptide directing secretion. The Ig-like domain occupies 21-113 (QSVTQLGSHV…DAAEYFCAVS (93 aa)). Cys42 and Cys110 are joined by a disulfide. N-linked (GlcNAc...) asparagine glycosylation occurs at Asn43.

As to quaternary structure, alpha-beta TR is a heterodimer composed of an alpha and beta chain; disulfide-linked. The alpha-beta TR is associated with the transmembrane signaling CD3 coreceptor proteins to form the TR-CD3 (TcR or TCR). The assembly of alpha-beta TR heterodimers with CD3 occurs in the endoplasmic reticulum where a single alpha-beta TR heterodimer associates with one CD3D-CD3E heterodimer, one CD3G-CD3E heterodimer and one CD247 homodimer forming a stable octameric structure. CD3D-CD3E and CD3G-CD3E heterodimers preferentially associate with TR alpha and TR beta chains, respectively. The association of the CD247 homodimer is the last step of TcR assembly in the endoplasmic reticulum and is required for transport to the cell surface.

It localises to the cell membrane. V region of the variable domain of T cell receptor (TR) alpha chain that participates in the antigen recognition. Alpha-beta T cell receptors are antigen specific receptors which are essential to the immune response and are present on the cell surface of T lymphocytes. Recognize peptide-major histocompatibility (MH) (pMH) complexes that are displayed by antigen presenting cells (APC), a prerequisite for efficient T cell adaptive immunity against pathogens. Binding of alpha-beta TR to pMH complex initiates TR-CD3 clustering on the cell surface and intracellular activation of LCK that phosphorylates the ITAM motifs of CD3G, CD3D, CD3E and CD247 enabling the recruitment of ZAP70. In turn ZAP70 phosphorylates LAT, which recruits numerous signaling molecules to form the LAT signalosome. The LAT signalosome propagates signal branching to three major signaling pathways, the calcium, the mitogen-activated protein kinase (MAPK) kinase and the nuclear factor-kappa-B (NF-kB) pathways, leading to the mobilization of transcription factors that are critical for gene expression and essential for T cell growth and differentiation. The T cell repertoire is generated in the thymus, by V-(D)-J rearrangement. This repertoire is then shaped by intrathymic selection events to generate a peripheral T cell pool of self-MH restricted, non-autoaggressive T cells. Post-thymic interaction of alpha-beta TR with the pMH complexes shapes TR structural and functional avidity. The polypeptide is T cell receptor alpha variable 8-4 (Homo sapiens (Human)).